The chain runs to 397 residues: Cell division protein DivIB (397 aa).

Residues 1–138 (MTTKDKGDQK…RIERIHLYRA (138 aa)) are Cytoplasmic-facing. The segment covering 24–37 (QEYLEKKSQEKASE) has biased composition (basic and acidic residues). Residues 24–115 (QEYLEKKSQE…DRTEKFIGQA (92 aa)) form a disordered region. Over residues 74–103 (ASDDDETNESEESEDVEEPEEENIEESSDV) the composition is skewed to acidic residues. Residues 139-159 (LPVLVISSLLILLSLYFITPL) form a helical membrane-spanning segment. Residues 160–231 (GSLKNLVVTG…ITFKIQVTEY (72 aa)) enclose the POTRA domain. Over 160–397 (GSLKNLVVTG…PSDVTDETNN (238 aa)) the chain is Extracellular. Positions 360 to 397 (LVQKEEQDQEQEKEESSEETVPGETEAAPSDVTDETNN) are disordered. Residues 366–377 (QDQEQEKEESSE) show a composition bias toward acidic residues.

It belongs to the FtsQ/DivIB family. DivIB subfamily.

The protein resides in the cell membrane. Functionally, cell division protein that may be involved in stabilizing or promoting the assembly of the division complex. The chain is Cell division protein DivIB from Streptococcus gordonii (strain Challis / ATCC 35105 / BCRC 15272 / CH1 / DL1 / V288).